The sequence spans 350 residues: Probable aldo-keto reductase 1 (350 aa).

The active-site Proton donor is the Y67. H135 provides a ligand contact to substrate. 214–224 (SPLGKGFFSSG) lines the NADP(+) pocket.

The protein belongs to the aldo/keto reductase family.

This chain is Probable aldo-keto reductase 1, found in Oryza sativa subsp. indica (Rice).